A 287-amino-acid polypeptide reads, in one-letter code: MPTIHYHISDLRVALRPYRTAQRIALVPTMGNLHDGHLELVKIAKQHADIVVVSIFVNPTQFGVGEDFDSYPRTLDEDVAKLAMVGADYVFAPTIDEMYPVLPPPTTILAGTITEQLCGKTRPNHFDGVGIVVSKLFNIVQPNIAVFGQKDYQQLAIIKQLVRDLSYSIDIIGAPIIRATDGLALSSRNQYLSESERQTAPILQQELQYSAKQISDNKQPLEVLLTAAHERITSAGFIIDYLEVKTTELTAVDDESINNHQDLVILVAAWLGRARLLDNRLVTINKV.

30-37 (MGNLHDGH) is an ATP binding site. H37 functions as the Proton donor in the catalytic mechanism. Q61 is a binding site for (R)-pantoate. Q61 is a beta-alanine binding site. 148-151 (GQKD) is a binding site for ATP. Q154 contacts (R)-pantoate. ATP is bound by residues I177 and 185-188 (LSSR).

Belongs to the pantothenate synthetase family. Homodimer.

It is found in the cytoplasm. The enzyme catalyses (R)-pantoate + beta-alanine + ATP = (R)-pantothenate + AMP + diphosphate + H(+). The protein operates within cofactor biosynthesis; (R)-pantothenate biosynthesis; (R)-pantothenate from (R)-pantoate and beta-alanine: step 1/1. In terms of biological role, catalyzes the condensation of pantoate with beta-alanine in an ATP-dependent reaction via a pantoyl-adenylate intermediate. This is Pantothenate synthetase from Psychrobacter cryohalolentis (strain ATCC BAA-1226 / DSM 17306 / VKM B-2378 / K5).